We begin with the raw amino-acid sequence, 1358 residues long: DNA-directed RNA polymerase subunit beta (1358 aa).

This sequence belongs to the RNA polymerase beta chain family. In terms of assembly, the RNAP catalytic core consists of 2 alpha, 1 beta, 1 beta' and 1 omega subunit. When a sigma factor is associated with the core the holoenzyme is formed, which can initiate transcription.

It carries out the reaction RNA(n) + a ribonucleoside 5'-triphosphate = RNA(n+1) + diphosphate. DNA-dependent RNA polymerase catalyzes the transcription of DNA into RNA using the four ribonucleoside triphosphates as substrates. This chain is DNA-directed RNA polymerase subunit beta, found in Francisella tularensis subsp. tularensis (strain FSC 198).